We begin with the raw amino-acid sequence, 179 residues long: Large ribosomal subunit protein uL10 (179 aa).

This sequence belongs to the universal ribosomal protein uL10 family. As to quaternary structure, part of the ribosomal stalk of the 50S ribosomal subunit. The N-terminus interacts with L11 and the large rRNA to form the base of the stalk. The C-terminus forms an elongated spine to which L12 dimers bind in a sequential fashion forming a multimeric L10(L12)X complex.

In terms of biological role, forms part of the ribosomal stalk, playing a central role in the interaction of the ribosome with GTP-bound translation factors. The chain is Large ribosomal subunit protein uL10 from Symbiobacterium thermophilum (strain DSM 24528 / JCM 14929 / IAM 14863 / T).